Here is a 572-residue protein sequence, read N- to C-terminus: Light-independent protochlorophyllide reductase subunit N (572 aa).

[4Fe-4S] cluster is bound by residues Cys106, Cys131, and Cys191. A disordered region spans residues Ser249 to Asn268.

This sequence belongs to the BchN/ChlN family. As to quaternary structure, protochlorophyllide reductase is composed of three subunits; ChlL, ChlN and ChlB. Forms a heterotetramer of two ChlB and two ChlN subunits. Requires [4Fe-4S] cluster as cofactor.

The protein resides in the plastid. It is found in the chloroplast. It carries out the reaction chlorophyllide a + oxidized 2[4Fe-4S]-[ferredoxin] + 2 ADP + 2 phosphate = protochlorophyllide a + reduced 2[4Fe-4S]-[ferredoxin] + 2 ATP + 2 H2O. It functions in the pathway porphyrin-containing compound metabolism; chlorophyll biosynthesis (light-independent). In terms of biological role, component of the dark-operative protochlorophyllide reductase (DPOR) that uses Mg-ATP and reduced ferredoxin to reduce ring D of protochlorophyllide (Pchlide) to form chlorophyllide a (Chlide). This reaction is light-independent. The NB-protein (ChlN-ChlB) is the catalytic component of the complex. The chain is Light-independent protochlorophyllide reductase subunit N from Oltmannsiellopsis viridis (Marine flagellate).